The following is a 424-amino-acid chain: L-glutamine:2-deoxy-scyllo-inosose aminotransferase (424 aa).

Residue Lys-202 is modified to N6-(pyridoxal phosphate)lysine.

This sequence belongs to the DegT/DnrJ/EryC1 family. L-glutamine:2-deoxy-scyllo-inosose/scyllo-inosose aminotransferase subfamily. It depends on pyridoxal 5'-phosphate as a cofactor.

The catalysed reaction is 2-deoxy-L-scyllo-inosose + L-glutamine = 2-deoxy-scyllo-inosamine + 2-oxoglutaramate. It catalyses the reaction 3-amino-2,3-dideoxy-scyllo-inosose + L-glutamine = 2-deoxystreptamine + 2-oxoglutaramate. Its pathway is metabolic intermediate biosynthesis; 2-deoxystreptamine biosynthesis; 2-deoxystreptamine from D-glucose 6-phosphate: step 2/4. It participates in metabolic intermediate biosynthesis; 2-deoxystreptamine biosynthesis; 2-deoxystreptamine from D-glucose 6-phosphate: step 4/4. It functions in the pathway antibiotic biosynthesis; neomycin biosynthesis. Functionally, catalyzes the PLP-dependent transamination of 2-deoxy-scyllo-inosose (2-DOI) to form 2-deoxy-scyllo-inosamine (2-DOIA) using L-glutamine as the amino donor. Also catalyzes the transamination of 3-amino-2,3-dideoxy-scyllo-inosose (keto-2-DOIA) into 2-deoxystreptamine (2-DOS). The chain is L-glutamine:2-deoxy-scyllo-inosose aminotransferase (neoB) from Streptomyces fradiae (Streptomyces roseoflavus).